Reading from the N-terminus, the 91-residue chain is Acyl carrier protein (91 aa).

Residues E6–E81 form the Carrier domain. S41 bears the O-(pantetheine 4'-phosphoryl)serine mark.

The protein belongs to the acyl carrier protein (ACP) family. In terms of processing, 4'-phosphopantetheine is transferred from CoA to a specific serine of apo-ACP by AcpS. This modification is essential for activity because fatty acids are bound in thioester linkage to the sulfhydryl of the prosthetic group.

Its subcellular location is the cytoplasm. It participates in lipid metabolism; fatty acid biosynthesis. Its function is as follows. Carrier of the growing fatty acid chain in fatty acid biosynthesis. The polypeptide is Acyl carrier protein (Rhodococcus erythropolis (strain PR4 / NBRC 100887)).